A 270-amino-acid chain; its full sequence is Ribitol operon repressor (270 aa).

The region spanning 1–61 (MKKITIYDLA…INRQASMLRS (61 aa)) is the HTH lacI-type domain. Positions 6–25 (IYDLAELSGVSASAVSAILN) form a DNA-binding region, H-T-H motif.

Its function is as follows. Repressor for the genes of the ribitol operon. Binds D-ribulose as an inducer. In Klebsiella aerogenes (Enterobacter aerogenes), this protein is Ribitol operon repressor (rbtR).